The primary structure comprises 671 residues: DNA ligase (671 aa).

NAD(+) is bound by residues Asp32 to Asp36, Ser81 to Leu82, and Glu113. The N6-AMP-lysine intermediate role is filled by Lys115. Residues Arg136, Glu173, Lys290, and Lys314 each coordinate NAD(+). Zn(2+) is bound by residues Cys408, Cys411, Cys426, and Cys432. The BRCT domain occupies Glu593–Ser671.

This sequence belongs to the NAD-dependent DNA ligase family. LigA subfamily. It depends on Mg(2+) as a cofactor. The cofactor is Mn(2+).

It catalyses the reaction NAD(+) + (deoxyribonucleotide)n-3'-hydroxyl + 5'-phospho-(deoxyribonucleotide)m = (deoxyribonucleotide)n+m + AMP + beta-nicotinamide D-nucleotide.. In terms of biological role, DNA ligase that catalyzes the formation of phosphodiester linkages between 5'-phosphoryl and 3'-hydroxyl groups in double-stranded DNA using NAD as a coenzyme and as the energy source for the reaction. It is essential for DNA replication and repair of damaged DNA. This Escherichia fergusonii (strain ATCC 35469 / DSM 13698 / CCUG 18766 / IAM 14443 / JCM 21226 / LMG 7866 / NBRC 102419 / NCTC 12128 / CDC 0568-73) protein is DNA ligase.